Reading from the N-terminus, the 564-residue chain is 2-succinyl-5-enolpyruvyl-6-hydroxy-3-cyclohexene-1-carboxylate synthase (564 aa).

It belongs to the TPP enzyme family. MenD subfamily. Homodimer. Mg(2+) is required as a cofactor. Mn(2+) serves as cofactor. Requires thiamine diphosphate as cofactor.

The enzyme catalyses isochorismate + 2-oxoglutarate + H(+) = 5-enolpyruvoyl-6-hydroxy-2-succinyl-cyclohex-3-ene-1-carboxylate + CO2. It participates in quinol/quinone metabolism; 1,4-dihydroxy-2-naphthoate biosynthesis; 1,4-dihydroxy-2-naphthoate from chorismate: step 2/7. It functions in the pathway quinol/quinone metabolism; menaquinone biosynthesis. Functionally, catalyzes the thiamine diphosphate-dependent decarboxylation of 2-oxoglutarate and the subsequent addition of the resulting succinic semialdehyde-thiamine pyrophosphate anion to isochorismate to yield 2-succinyl-5-enolpyruvyl-6-hydroxy-3-cyclohexene-1-carboxylate (SEPHCHC). This chain is 2-succinyl-5-enolpyruvyl-6-hydroxy-3-cyclohexene-1-carboxylate synthase, found in Vibrio vulnificus (strain CMCP6).